Reading from the N-terminus, the 2541-residue chain is Talin-1 (2541 aa).

An FERM domain is found at 86 to 403; sequence RPLKIRMLDG…GYIDIILKKK (318 aa). A Phosphothreonine modification is found at Thr-167. The interval 280–435 is interaction with LAYN; that stretch reads FQAHKNCGQM…PKKSTVLQQQ (156 aa). Phosphoserine occurs at positions 405, 425, 446, 620, and 729. Residues 482 to 655 form a helical bundle R1 region; sequence RGHMPPLTSA…QASGELLQQI (174 aa). A helical bundle R2 region spans residues 656–786; the sequence is GESDTDPHFQ…ALNELLQHVK (131 aa). The helical bundle R3 stretch occupies residues 787 to 911; sequence AHATGAGPAG…NAAAQNAIKK (125 aa). The interval 913–1044 is helical bundle R4; it reads LVQRLEHAAK…RTAAQKAQEA (132 aa). At Ser-1021 the chain carries Phosphoserine. A helical bundle R5 region spans residues 1046–1206; that stretch reads GPLEMDSALS…NRCVSCLPGQ (161 aa). Tyr-1116 carries the phosphotyrosine modification. Thr-1142 is modified (phosphothreonine). Phosphoserine is present on residues Ser-1201 and Ser-1225. The segment at 1207-1357 is helical bundle R6; that stretch reads RDVDNALRAV…QLITMCTQQA (151 aa). Residue Thr-1263 is modified to Phosphothreonine. Residues Ser-1323 and Ser-1328 each carry the phosphoserine modification. Residues 1327–1948 are interaction with SYNM; that stretch reads ASPNLKSQLA…CSPSDVYTKK (622 aa). Positions 1358–1453 are helical bundle R7A; Interaction with KANK1; it reads PGQKECDNAL…AYLVGVSDPN (96 aa). Residues 1359–1659 form an interaction with VCL and F-actin region; that stretch reads GQKECDNALR…SMRDKAPGQL (301 aa). The tract at residues 1461–1580 is helical bundle R8; it reads LVEPTQFARA…NLSAFASNPE (120 aa). Residue Lys-1544 is modified to N6-acetyllysine. The helical bundle R7B; Interaction with KANK1 stretch occupies residues 1581 to 1653; it reads FSSVPAQISP…IKKLITSMRD (73 aa). The segment at 1655 to 1822 is helical bundle R9; that stretch reads APGQLECETA…TLNEAASAAG (168 aa). Residues 1823–1973 form a helical bundle R10 region; it reads VVGGMVDSIT…VLAALQAGNR (151 aa). Ser-1849 carries the post-translational modification Phosphoserine. Thr-1855 is modified (phosphothreonine). At Ser-1878 the chain carries Phosphoserine. Residues 1974 to 2140 form a helical bundle R11 region; it reads GTQACITAAS…TVKAVEDEAT (167 aa). Lys-2031 is subject to N6-acetyllysine. The residue at position 2040 (Ser-2040) is a Phosphoserine. N6-acetyllysine is present on Lys-2115. A helical bundle R12 region spans residues 2141-2294; the sequence is KGTRALEATT…QAAEAMKGTE (154 aa). Positions 2293-2533 constitute an I/LWEQ domain; it reads TEWVDPEDPT…QIRQQQYKFL (241 aa). Residues 2300-2482 form a helical bundle R13 region; that stretch reads DPTVIAENEL…AAQKAAAFED (183 aa).

In terms of assembly, part of a complex composed of THSD1, PTK2/FAK1, TLN1 and VCL. Interacts with THSD1; this promotes interaction with PTK2/FAK1 and VCL. Interacts with NRAP and LAYN. Interacts with SYNM. Interacts with ITGB1; the interaction is prevented by competitive binding of ITGB1BP1. Binds with high affinity to VCL and with low affinity to integrins. Interacts with APBB1IP; this inhibits VCL binding. Interacts with PTK2/FAK1. Interacts with PIP5K1C. Interacts with F-actin. Interacts with SVEP1. Interacts (via R7 domain) with KANK1 or KANK2 (via KN motif); this interaction likely initiates the assembly of cortical microtubule stabilization complexes (CMSCs) at the vicinity of focal adhesions.

It localises to the cell projection. It is found in the ruffle membrane. The protein resides in the cytoplasm. The protein localises to the cytoskeleton. Its subcellular location is the cell surface. It localises to the cell junction. It is found in the focal adhesion. Functionally, high molecular weight cytoskeletal protein concentrated at regions of cell-matrix and cell-cell contacts. Involved in connections of major cytoskeletal structures to the plasma membrane. With KANK1 co-organize the assembly of cortical microtubule stabilizing complexes (CMSCs) positioned to control microtubule-actin crosstalk at focal adhesions (FAs) rims. This chain is Talin-1 (Tln1), found in Mus musculus (Mouse).